Consider the following 409-residue polypeptide: Tyrosine--tRNA ligase (409 aa).

L-tyrosine is bound at residue Tyr35. The short motif at 40-49 is the 'HIGH' region element; it reads PTGSSLHVGH. Tyr168 and Gln172 together coordinate L-tyrosine. The short motif at 228-232 is the 'KMSKS' region element; it reads KMGKT. Lys231 contacts ATP. One can recognise an S4 RNA-binding domain in the interval 339 to 404; that stretch reads IKVTDLFVQV…AGKKRVVRIV (66 aa).

The protein belongs to the class-I aminoacyl-tRNA synthetase family. TyrS type 1 subfamily. As to quaternary structure, homodimer.

It is found in the cytoplasm. It catalyses the reaction tRNA(Tyr) + L-tyrosine + ATP = L-tyrosyl-tRNA(Tyr) + AMP + diphosphate + H(+). Catalyzes the attachment of tyrosine to tRNA(Tyr) in a two-step reaction: tyrosine is first activated by ATP to form Tyr-AMP and then transferred to the acceptor end of tRNA(Tyr). The sequence is that of Tyrosine--tRNA ligase from Treponema pallidum (strain Nichols).